We begin with the raw amino-acid sequence, 261 residues long: Endonuclease NucS (261 aa).

This sequence belongs to the NucS endonuclease family.

The protein resides in the cytoplasm. Its function is as follows. Cleaves both 3' and 5' ssDNA extremities of branched DNA structures. This Aeropyrum pernix (strain ATCC 700893 / DSM 11879 / JCM 9820 / NBRC 100138 / K1) protein is Endonuclease NucS.